The chain runs to 224 residues: Triosephosphate isomerase (224 aa).

9–11 (NFK) is a substrate binding site. His-93 serves as the catalytic Electrophile. Glu-141 functions as the Proton acceptor in the catalytic mechanism. Residues Ile-146, Gly-181, and 202–203 (AS) each bind substrate.

Belongs to the triosephosphate isomerase family. In terms of assembly, homotetramer; dimer of dimers.

It is found in the cytoplasm. The enzyme catalyses D-glyceraldehyde 3-phosphate = dihydroxyacetone phosphate. It participates in carbohydrate biosynthesis; gluconeogenesis. It functions in the pathway carbohydrate degradation; glycolysis; D-glyceraldehyde 3-phosphate from glycerone phosphate: step 1/1. Involved in the gluconeogenesis. Catalyzes stereospecifically the conversion of dihydroxyacetone phosphate (DHAP) to D-glyceraldehyde-3-phosphate (G3P). In Pyrobaculum arsenaticum (strain DSM 13514 / JCM 11321 / PZ6), this protein is Triosephosphate isomerase.